A 383-amino-acid chain; its full sequence is Delta(12) acyl-lipid conjugase (11E,13E-forming) (383 aa).

A disordered region spans residues 1–30 (MGEVGPTNRTKTKLDKQQESENRVPHEPPP). Basic and acidic residues predominate over residues 12 to 26 (TKLDKQQESENRVPH). Transmembrane regions (helical) follow at residues 56 to 76 (VIHD…YIPM) and 84 to 104 (VAWP…LVLG). A Histidine box-1 motif is present at residues 105–109 (HECGH). The Histidine box-2 motif lies at 141 to 145 (HRRHH). A run of 3 helical transmembrane segments spans residues 179–199 (FLMI…FNAN), 225–245 (VIAS…IALA), and 249–269 (VWLI…IVLI). The short motif at 315-319 (HLVHH) is the Histidine box-3 element.

Belongs to the fatty acid desaturase type 1 family. In terms of tissue distribution, expressed in developing seeds, but not in leaves.

The protein localises to the membrane. The enzyme catalyses a (9Z,12Z)-octadecadienoyl-containing glycerolipid + 2 Fe(II)-[cytochrome b5] + O2 + 2 H(+) = a (9Z,11E,13E)-octadecatrienoyl-containing glycerolipid + 2 Fe(III)-[cytochrome b5] + 2 H2O. The catalysed reaction is (9Z,12Z,15Z)-octadecatrienoyl-containing glycerolipid + 2 Fe(II)-[cytochrome b5] + O2 + 2 H(+) = a (9Z,11E,13E,15Z)-octadecatetraenoyl-containing glycerolipid + 2 Fe(III)-[cytochrome b5] + 2 H2O. Its pathway is lipid metabolism; polyunsaturated fatty acid biosynthesis. Its function is as follows. Converts linoleic acid to alpha-eleostearic acid (18:3(9Z,11E,13E)) and alpha-linolenic acid to alpha-parinaric acid (18:4(9Z,11E, 13E, 15Z)). Converts a single cis double bond at carbon 12 to two conjugated trans bonds at positions 11 and 13. The protein is Delta(12) acyl-lipid conjugase (11E,13E-forming) of Impatiens balsamina (Balsam).